The primary structure comprises 441 residues: Probable D-serine dehydratase (441 aa).

An N6-(pyridoxal phosphate)lysine modification is found at lysine 101.

It belongs to the serine/threonine dehydratase family. DsdA subfamily. The cofactor is pyridoxal 5'-phosphate.

It carries out the reaction D-serine = pyruvate + NH4(+). This Geobacillus kaustophilus (strain HTA426) protein is Probable D-serine dehydratase.